Consider the following 323-residue polypeptide: 1-aminocyclopropane-1-carboxylate oxidase 4 (323 aa).

The residue at position 1 (methionine 1) is an N-acetylmethionine. The 102-residue stretch at 153–254 (PTFGTKVSNY…RMSIASFYNP (102 aa)) folds into the Fe2OG dioxygenase domain. Residues histidine 177, aspartate 179, and histidine 234 each coordinate Fe cation. Arginine 245 provides a ligand contact to 2-oxoglutarate.

The protein belongs to the iron/ascorbate-dependent oxidoreductase family. It depends on Fe cation as a cofactor. In terms of tissue distribution, expressed in vegetative tissues. Expressed constitutively at a low level in leaves and blades.

The catalysed reaction is 1-aminocyclopropane-1-carboxylate + L-ascorbate + O2 = ethene + L-dehydroascorbate + hydrogen cyanide + CO2 + 2 H2O. It functions in the pathway alkene biosynthesis; ethylene biosynthesis via S-adenosyl-L-methionine; ethylene from S-adenosyl-L-methionine: step 2/2. In terms of biological role, enzyme involved in the ethylene biosynthesis. May promote stem elongation by maximizing the extensibility cells, possibly by activating ethylene biosynthesis, in response to very-long-chain fatty acids (VLCFAs C20:0 to C30:0). This is 1-aminocyclopropane-1-carboxylate oxidase 4 (ACO4) from Arabidopsis thaliana (Mouse-ear cress).